The primary structure comprises 516 residues: BAR/IMD domain-containing adapter protein 2-like 1 (516 aa).

The IMD domain maps to 1 to 249 (MSRGPEEVNR…MNMIEEIKTP (249 aa)). A coiled-coil region spans residues 115 to 148 (MNATLKRYQAEHRNKLDSLEKSQAELKKIRRKSQ). Thr248 and Thr257 each carry phosphothreonine. Residues Ser261 and Ser281 each carry the phosphoserine modification. Residues 303 to 328 (NPATAGQSAEKTNNSTANTGDDPSLQ) are disordered. Ser332 bears the Phosphoserine mark. Residues 340–403 (MKKQKVKTIF…PSSYTKLLEE (64 aa)) enclose the SH3 domain. Phosphothreonine is present on Thr413. Residues Ser415, Ser421, and Ser423 each carry the phosphoserine modification. A disordered region spans residues 454–516 (ADAAKIPSTS…TNDRSAPIIR (63 aa)). Positions 474 to 485 (ATSTSPSDSNGT) are enriched in polar residues. The tract at residues 488–516 (PPFLSGENPFATVKLRPTVTNDRSAPIIR) is binds F-actin.

As to quaternary structure, interacts with RAC1. Binds to F-actin. Interacts with FASLG. Phosphorylated on tyrosine in response to insulin.

It is found in the cytoplasm. The protein resides in the cytoskeleton. Its function is as follows. May function as adapter protein. Involved in the formation of clusters of actin bundles. Plays a role in the reorganization of the actin cytoskeleton in response to bacterial infection. The sequence is that of BAR/IMD domain-containing adapter protein 2-like 1 (Baiap2l1) from Rattus norvegicus (Rat).